Reading from the N-terminus, the 233-residue chain is Transcriptional regulatory protein NatR (233 aa).

The region spanning 3-117 (KVGLVDDYRV…RLAASFDRYL (115 aa)) is the Response regulatory domain. A 4-aspartylphosphate modification is found at Asp54. In terms of domain architecture, HTH LytTR-type spans 129 to 233 (ILIKQKSEMH…QLDYFQNYYF (105 aa)).

Post-translationally, phosphorylated by NatK.

The protein resides in the cytoplasm. Functionally, member of the two-component regulatory system NatK/NatR that positively regulates the expression of the natAB operon. Acts by binding directly to the promoter of natAB. The protein is Transcriptional regulatory protein NatR of Bacillus subtilis (strain 168).